The chain runs to 397 residues: Alpha-lytic protease (397 aa).

The first 24 residues, 1-24 (MYVSNHRSRRVARVSVSCLVAALA), serve as a signal peptide directing secretion. Residues 25-199 (AMSCGAALAA…ESSPGKLQTT (175 aa)) constitute a propeptide that is removed on maturation. A disulfide bond links Cys216 and Cys236. Active-site charge relay system residues include His235 and Asp262. 2 disulfide bridges follow: Cys300–Cys310 and Cys336–Cys369. The active-site Charge relay system is the Ser342.

It belongs to the peptidase S1 family.

The catalysed reaction is Preferential cleavage: Ala-|-Xaa, Val-|-Xaa in bacterial cell walls, elastin and other proteins.. The chain is Alpha-lytic protease (alpha-LP) from Lysobacter enzymogenes.